The primary structure comprises 143 residues: Small ribosomal subunit protein bS6 (143 aa).

Residues 97–143 form a disordered region; it reads DTEQSLIMKSKDEKGDKHERSERRRRDDEEGDVPAATDTDGDNAEAA. Basic and acidic residues predominate over residues 105 to 124; it reads KSKDEKGDKHERSERRRRDD.

It belongs to the bacterial ribosomal protein bS6 family.

In terms of biological role, binds together with bS18 to 16S ribosomal RNA. This chain is Small ribosomal subunit protein bS6, found in Xanthomonas oryzae pv. oryzae (strain MAFF 311018).